The following is a 492-amino-acid chain: Homoserine O-acetyltransferase (492 aa).

Positions 47–354 constitute an AB hydrolase-1 domain; it reads NVILVCHALT…NYGHDAFLLE (308 aa). Ser152 (nucleophile) is an active-site residue. Residue Arg221 coordinates substrate. Residues Asp315 and His348 contribute to the active site. Asp349 provides a ligand contact to substrate. CBS domains lie at 375–432 and 436–492; these read MKLD…FTTL and LTKN…HRCT.

It belongs to the AB hydrolase superfamily. MetX family. In terms of assembly, homodimer.

The protein resides in the cytoplasm. The enzyme catalyses L-homoserine + acetyl-CoA = O-acetyl-L-homoserine + CoA. It functions in the pathway amino-acid biosynthesis; L-methionine biosynthesis via de novo pathway; O-acetyl-L-homoserine from L-homoserine: step 1/1. In terms of biological role, transfers an acetyl group from acetyl-CoA to L-homoserine, forming acetyl-L-homoserine. The chain is Homoserine O-acetyltransferase from Methanosalsum zhilinae (strain DSM 4017 / NBRC 107636 / OCM 62 / WeN5) (Methanohalophilus zhilinae).